The sequence spans 168 residues: Scytalone dehydratase arp1 (168 aa).

Residues tyrosine 29 and tyrosine 49 each contribute to the substrate site. Active-site residues include histidine 84 and histidine 109. Residue asparagine 130 coordinates substrate.

It belongs to the scytalone dehydratase family. Homotrimer. Each subunit contains an active site, located in the central part of the hydrophobic core of the monomer, which functions independently.

It localises to the endosome. It catalyses the reaction scytalone = 1,3,8-trihydroxynaphthalene + H2O. It participates in pigment biosynthesis; melanin biosynthesis. With respect to regulation, fenoxanil inhibits arp1 scytalone dehydratase activity. Scytalone dehydratase; part of the gene cluster that mediates the biosynthesis of dihydroxynaphthalene (DHN)-melanin, a bluish-green pigment and a structural component of the conidial wall. The first step of the pathway is the production of the heptaketide naphtopyrone YWA1 by the polyketide synthase alb1 though condensation of acetyl-CoA with malonyl-CoA. The naphtopyrone YWA1 is then converted to the pentaketide 1,3,6,8-tetrahydroxynaphthalene (1,3,6,8-THN) by the heptaketide hydrolyase ayg1 though chain-length shortening. 1,3,6,8-THN is substrate of the hydroxynaphthalene reductase arp2 to yield scytalone. The scytalone dehydratase arp1 then reduces scytalone to 1,3,8-THN. 1,3,8-THN is also substrate of the hydroxynaphthalene reductase arp2 to yield vermelone. Vermelone is further converted by the multicopper oxidase abr1 to 1,8-DHN. Finally the laccase abr2 transforms 1,8-DHN to DHN-melanin. DHN-melanin biosynthesis appears to be initiated in endosomes where early enzymes (abl1, ayg1, arp1 and arp2) localize, with exocytosis leading to melanin deposition on the cell surface where late enzymes (abr1 and abr2) localize. DHN-melanin is an important structural component of the outer cell wall and is required for the presence of conidial surface hydrophobins. DHN-melanin also plays a crucial role in fungal virulence, including a protective role against the host's immune defenses. DHN-melanin also protects conidia against amoeba predation. This chain is Scytalone dehydratase arp1, found in Aspergillus fumigatus (strain ATCC MYA-4609 / CBS 101355 / FGSC A1100 / Af293) (Neosartorya fumigata).